A 103-amino-acid polypeptide reads, in one-letter code: Pyrimidine/purine nucleoside phosphorylase (103 aa).

The protein belongs to the nucleoside phosphorylase PpnP family.

It carries out the reaction a purine D-ribonucleoside + phosphate = a purine nucleobase + alpha-D-ribose 1-phosphate. The enzyme catalyses adenosine + phosphate = alpha-D-ribose 1-phosphate + adenine. The catalysed reaction is cytidine + phosphate = cytosine + alpha-D-ribose 1-phosphate. It catalyses the reaction guanosine + phosphate = alpha-D-ribose 1-phosphate + guanine. It carries out the reaction inosine + phosphate = alpha-D-ribose 1-phosphate + hypoxanthine. The enzyme catalyses thymidine + phosphate = 2-deoxy-alpha-D-ribose 1-phosphate + thymine. The catalysed reaction is uridine + phosphate = alpha-D-ribose 1-phosphate + uracil. It catalyses the reaction xanthosine + phosphate = alpha-D-ribose 1-phosphate + xanthine. Catalyzes the phosphorolysis of diverse nucleosides, yielding D-ribose 1-phosphate and the respective free bases. Can use uridine, adenosine, guanosine, cytidine, thymidine, inosine and xanthosine as substrates. Also catalyzes the reverse reactions. The chain is Pyrimidine/purine nucleoside phosphorylase from Shewanella oneidensis (strain ATCC 700550 / JCM 31522 / CIP 106686 / LMG 19005 / NCIMB 14063 / MR-1).